A 310-amino-acid polypeptide reads, in one-letter code: Thiamine-monophosphate kinase (310 aa).

Aspartate 26, threonine 40, serine 41, and aspartate 42 together coordinate Mg(2+). Residue aspartate 49 participates in substrate binding. Mg(2+) contacts are provided by aspartate 70 and aspartate 118. ATP contacts are provided by residues glycine 117 to aspartate 118 and arginine 141. Aspartate 202 lines the Mg(2+) pocket. Serine 204 contributes to the ATP binding site. Aspartate 205 is a Mg(2+) binding site. Residues glutamate 251 and tryptophan 299 each coordinate substrate.

The protein belongs to the thiamine-monophosphate kinase family.

It carries out the reaction thiamine phosphate + ATP = thiamine diphosphate + ADP. The protein operates within cofactor biosynthesis; thiamine diphosphate biosynthesis; thiamine diphosphate from thiamine phosphate: step 1/1. Functionally, catalyzes the ATP-dependent phosphorylation of thiamine-monophosphate (TMP) to form thiamine-pyrophosphate (TPP), the active form of vitamin B1. In Pyrococcus abyssi (strain GE5 / Orsay), this protein is Thiamine-monophosphate kinase.